Consider the following 283-residue polypeptide: Putative 4-diphosphocytidyl-2-C-methyl-D-erythritol kinase (283 aa).

Residue Lys-11 is part of the active site. Pro-95 to Ser-105 contacts ATP. Asp-137 is a catalytic residue.

This sequence belongs to the GHMP kinase family. IspE subfamily.

It catalyses the reaction 4-CDP-2-C-methyl-D-erythritol + ATP = 4-CDP-2-C-methyl-D-erythritol 2-phosphate + ADP + H(+). In terms of biological role, catalyzes the phosphorylation of the position 2 hydroxy group of 4-diphosphocytidyl-2C-methyl-D-erythritol. In Streptococcus equi subsp. equi (strain 4047), this protein is Putative 4-diphosphocytidyl-2-C-methyl-D-erythritol kinase.